We begin with the raw amino-acid sequence, 352 residues long: RNA-binding protein lark (352 aa).

RRM domains are found at residues F7 to S77 and T86 to S156. The CCHC-type zinc finger occupies E168–R185. Disordered regions lie at residues Y187 to R228 and Y254 to Y352. Phosphoserine is present on residues S198 and S201. 2 stretches are compositionally biased toward pro residues: residues P214–F224 and F262–P277. Polar residues predominate over residues L279 to V288. 2 positions are modified to phosphoserine: S315 and S325. A compositionally biased stretch (basic and acidic residues) spans G320–I334.

As to expression, expressed in the CNS and in CCAP neurons of the ventral nervous system (VNS), which control insect ecdysis.

The protein localises to the cytoplasm. The protein resides in the nucleus. Functionally, essential RNA-binding protein. May be required for circadian repression of eclosion. Also essential for nurse cell dumping during oogenesis, the process whereby the cytoplasmic contents of nurse cells are transferred to the oocyte late in it's development. This is RNA-binding protein lark (lark) from Drosophila melanogaster (Fruit fly).